The sequence spans 428 residues: D-amino acid dehydrogenase (428 aa).

3–17 is a binding site for FAD; that stretch reads VVILGSGVVGVASAY.

Belongs to the DadA oxidoreductase family. FAD is required as a cofactor.

The enzyme catalyses a D-alpha-amino acid + A + H2O = a 2-oxocarboxylate + AH2 + NH4(+). It participates in amino-acid degradation; D-alanine degradation; NH(3) and pyruvate from D-alanine: step 1/1. Its function is as follows. Oxidative deamination of D-amino acids. The polypeptide is D-amino acid dehydrogenase (Burkholderia pseudomallei (strain K96243)).